Reading from the N-terminus, the 274-residue chain is Dermonecrotic toxin SaSicTox-betaIIB1 (274 aa).

Histidine 5 is an active-site residue. Mg(2+)-binding residues include glutamate 25 and aspartate 27. Histidine 41 serves as the catalytic Nucleophile. Disulfide bonds link cysteine 45–cysteine 51 and cysteine 47–cysteine 190. Position 85 (aspartate 85) interacts with Mg(2+).

This sequence belongs to the arthropod phospholipase D family. Class II subfamily. Mg(2+) serves as cofactor. Expressed by the venom gland.

It is found in the secreted. It carries out the reaction an N-(acyl)-sphingosylphosphocholine = an N-(acyl)-sphingosyl-1,3-cyclic phosphate + choline. The enzyme catalyses an N-(acyl)-sphingosylphosphoethanolamine = an N-(acyl)-sphingosyl-1,3-cyclic phosphate + ethanolamine. It catalyses the reaction a 1-acyl-sn-glycero-3-phosphocholine = a 1-acyl-sn-glycero-2,3-cyclic phosphate + choline. The catalysed reaction is a 1-acyl-sn-glycero-3-phosphoethanolamine = a 1-acyl-sn-glycero-2,3-cyclic phosphate + ethanolamine. Its function is as follows. Dermonecrotic toxins cleave the phosphodiester linkage between the phosphate and headgroup of certain phospholipids (sphingolipid and lysolipid substrates), forming an alcohol (often choline) and a cyclic phosphate. This toxin acts on sphingomyelin (SM). It may also act on ceramide phosphoethanolamine (CPE), lysophosphatidylcholine (LPC) and lysophosphatidylethanolamine (LPE), but not on lysophosphatidylserine (LPS), and lysophosphatidylglycerol (LPG). It acts by transphosphatidylation, releasing exclusively cyclic phosphate products as second products. Induces dermonecrosis, hemolysis, increased vascular permeability, edema, inflammatory response, and platelet aggregation. This chain is Dermonecrotic toxin SaSicTox-betaIIB1, found in Sicarius albospinosus (Six-eyed crab spider).